Reading from the N-terminus, the 344-residue chain is Melanocyte-stimulating hormone receptor (344 aa).

Over 1–37 (MPMQGAQRKLLGSLNSTPTATSNLGLAANHTGAPCLE) the chain is Extracellular. The N-linked (GlcNAc...) asparagine glycan is linked to asparagine 29. The helical transmembrane segment at 38 to 63 (VSIPDGLFLSLGLVSLVENVLVVAAI) threads the bilayer. The Cytoplasmic segment spans residues 64-72 (AKNRNLHSS). Residues 73 to 93 (MYCFICCLALSDLLVSGSNML) traverse the membrane as a helical segment. Residues 94–118 (ETAIILLLEAGTLATRASVVQQLHN) lie on the Extracellular side of the membrane. A helical membrane pass occupies residues 119-140 (TIDVLTCSSMLCSLCFLGAIAV). The Cytoplasmic portion of the chain corresponds to 141–163 (DRYISIFYALRYHSIMTLPRAQR). The chain crosses the membrane as a helical span at residues 164 to 183 (AIAAIWVTSVLSSTLFITYY). Residues 184–191 (DHAAVLLC) lie on the Extracellular side of the membrane. Residues 192 to 211 (LVVFFLAMLVLMAVLYVHML) form a helical membrane-spanning segment. At 212 to 240 (ARACQHAQGIIRLHNRQLPAHKGFGLRGA) the chain is on the cytoplasmic side. Residues 241 to 266 (ATLTILLGIFFLCWGPFFLHLTLVVF) form a helical membrane-spanning segment. The Extracellular segment spans residues 267–279 (CPQHLTCNCIFKN). The chain crosses the membrane as a helical span at residues 280 to 300 (FKVFLTLIICNTIIDPLIYAF). The Cytoplasmic segment spans residues 301–344 (RSQELRRTLKEVLLCSWWPGCGAEGGGDSVWPGSCVTLRGPLPP). A lipid anchor (S-palmitoyl cysteine) is attached at cysteine 315.

It belongs to the G-protein coupled receptor 1 family. Interacts with MGRN1, but does not undergo MGRN1-mediated ubiquitination; this interaction competes with GNAS-binding and thus inhibits agonist-induced cAMP production. Interacts with OPN3; the interaction results in a decrease in MC1R-mediated cAMP signaling and ultimately a decrease in melanin production in melanocytes.

The protein resides in the cell membrane. Functionally, receptor for MSH (alpha, beta and gamma) and ACTH. The activity of this receptor is mediated by G proteins which activate adenylate cyclase. Mediates melanogenesis, the production of eumelanin (black/brown) and phaeomelanin (red/yellow), via regulation of cAMP signaling in melanocytes. In Mico argentatus (Silvery marmoset), this protein is Melanocyte-stimulating hormone receptor (MC1R).